Reading from the N-terminus, the 771-residue chain is Beta-glucan synthesis-associated protein SKN1 (771 aa).

A compositionally biased stretch (polar residues) spans M1–H11. Disordered stretches follow at residues M1–S112 and A126–R186. Over M1–S289 the chain is Cytoplasmic. Positions S14 to S37 are enriched in low complexity. Phosphoserine occurs at positions 56, 65, 67, 92, 103, 142, 162, 165, 170, and 176. Residues N76 to D93 show a composition bias toward low complexity. Composition is skewed to low complexity over residues A126–H152 and N159–L177. Residues F290 to L310 form a helical; Signal-anchor for type II membrane protein membrane-spanning segment. Residues P311–S771 are Lumenal-facing. N337, N426, N513, N590, N615, and N743 each carry an N-linked (GlcNAc...) asparagine glycan. The GH16 domain occupies A353–S716.

The protein belongs to the SKN1/KRE6 family.

It is found in the membrane. In terms of biological role, required for synthesis of the major beta-glucans of the yeast cell wall. This is Beta-glucan synthesis-associated protein SKN1 (SKN1) from Saccharomyces cerevisiae (strain ATCC 204508 / S288c) (Baker's yeast).